Reading from the N-terminus, the 177-residue chain is Large ribosomal subunit protein uL6 (177 aa).

The protein belongs to the universal ribosomal protein uL6 family. In terms of assembly, part of the 50S ribosomal subunit.

Functionally, this protein binds to the 23S rRNA, and is important in its secondary structure. It is located near the subunit interface in the base of the L7/L12 stalk, and near the tRNA binding site of the peptidyltransferase center. The polypeptide is Large ribosomal subunit protein uL6 (Rhodospirillum centenum (strain ATCC 51521 / SW)).